The primary structure comprises 481 residues: Argininosuccinate lyase (481 aa).

It belongs to the lyase 1 family. Argininosuccinate lyase subfamily.

The protein resides in the cytoplasm. It carries out the reaction 2-(N(omega)-L-arginino)succinate = fumarate + L-arginine. The protein operates within amino-acid biosynthesis; L-arginine biosynthesis; L-arginine from L-ornithine and carbamoyl phosphate: step 3/3. The sequence is that of Argininosuccinate lyase from Methanococcus maripaludis (strain C7 / ATCC BAA-1331).